A 427-amino-acid chain; its full sequence is Glutamate-1-semialdehyde 2,1-aminomutase (427 aa).

An N6-(pyridoxal phosphate)lysine modification is found at Lys265.

This sequence belongs to the class-III pyridoxal-phosphate-dependent aminotransferase family. HemL subfamily. Homodimer. The cofactor is pyridoxal 5'-phosphate.

Its subcellular location is the cytoplasm. The catalysed reaction is (S)-4-amino-5-oxopentanoate = 5-aminolevulinate. It functions in the pathway porphyrin-containing compound metabolism; protoporphyrin-IX biosynthesis; 5-aminolevulinate from L-glutamyl-tRNA(Glu): step 2/2. This is Glutamate-1-semialdehyde 2,1-aminomutase from Neisseria meningitidis serogroup A / serotype 4A (strain DSM 15465 / Z2491).